The primary structure comprises 94 residues: DNA-directed RNA polymerase subunit Rpo11 (94 aa).

This sequence belongs to the archaeal Rpo11/eukaryotic RPB11/RPC19 RNA polymerase subunit family. Part of the RNA polymerase complex.

The protein resides in the cytoplasm. It carries out the reaction RNA(n) + a ribonucleoside 5'-triphosphate = RNA(n+1) + diphosphate. In terms of biological role, DNA-dependent RNA polymerase (RNAP) catalyzes the transcription of DNA into RNA using the four ribonucleoside triphosphates as substrates. The chain is DNA-directed RNA polymerase subunit Rpo11 from Haloarcula marismortui (strain ATCC 43049 / DSM 3752 / JCM 8966 / VKM B-1809) (Halobacterium marismortui).